We begin with the raw amino-acid sequence, 74 residues long: Small heat shock protein hspG10 (74 aa).

The region spanning 31-74 is the sHSP domain; the sequence is KTIIDILPSMDVTMTNDKLIIETELAGISKDHIEIDIKDSILTI.

It belongs to the small heat shock protein (HSP20) family.

The protein is Small heat shock protein hspG10 (hspG10) of Dictyostelium discoideum (Social amoeba).